A 188-amino-acid chain; its full sequence is MGIDIRHNKDRKVRRKEPKSQDIYLRLLVKLYRFLARRTNSSFNRVVLKRLFMSRTNRPPLSMSRLIRKMKLQGRENKTAVVVGYITDDVRIHDIPKLKVCALKITSGDRSRILKSGGQIMTFDQLALAAPKGQNTVLLSGPRKAREVYRHFGKAPGTPHSRTKPYVLSKGRKFERARGRRASRGYKN.

The disordered stretch occupies residues 153-188; that stretch reads GKAPGTPHSRTKPYVLSKGRKFERARGRRASRGYKN. Positions 178-188 are enriched in basic residues; sequence RGRRASRGYKN.

Belongs to the eukaryotic ribosomal protein eL18 family. As to quaternary structure, component of the large ribosomal subunit.

It is found in the cytoplasm. It localises to the cytosol. The protein resides in the rough endoplasmic reticulum. Functionally, component of the large ribosomal subunit. The ribosome is a large ribonucleoprotein complex responsible for the synthesis of proteins in the cell. The chain is Large ribosomal subunit protein eL18B (rpl18-b) from Xenopus laevis (African clawed frog).